Here is a 249-residue protein sequence, read N- to C-terminus: 3-deoxy-D-manno-octulosonic acid kinase (249 aa).

Residue aspartate 175 is part of the active site.

The protein belongs to the protein kinase superfamily. KdkA/RfaP family.

It is found in the cell inner membrane. It catalyses the reaction an alpha-Kdo-(2-&gt;6)-lipid IVA + ATP = a 4-O-phospho-alpha-Kdo-(2-&gt;6)-lipid IVA + ADP + H(+). Its pathway is bacterial outer membrane biogenesis; LPS core biosynthesis. Its function is as follows. Catalyzes the ATP-dependent phosphorylation of the 3-deoxy-D-manno-octulosonic acid (Kdo) residue in Kdo-lipid IV(A) at the 4-OH position. This Stenotrophomonas maltophilia (strain K279a) protein is 3-deoxy-D-manno-octulosonic acid kinase.